Consider the following 326-residue polypeptide: DNA-directed RNA polymerase subunit alpha (326 aa).

The interval 1 to 231 is alpha N-terminal domain (alpha-NTD); that stretch reads MQSNALLKPR…DQLSVFADLE (231 aa). The tract at residues 245-326 is alpha C-terminal domain (alpha-CTD); that stretch reads IDPVLLRPVD…WPPAGLEKLG (82 aa).

It belongs to the RNA polymerase alpha chain family. Homodimer. The RNAP catalytic core consists of 2 alpha, 1 beta, 1 beta' and 1 omega subunit. When a sigma factor is associated with the core the holoenzyme is formed, which can initiate transcription.

It carries out the reaction RNA(n) + a ribonucleoside 5'-triphosphate = RNA(n+1) + diphosphate. Its function is as follows. DNA-dependent RNA polymerase catalyzes the transcription of DNA into RNA using the four ribonucleoside triphosphates as substrates. The polypeptide is DNA-directed RNA polymerase subunit alpha (Azoarcus sp. (strain BH72)).